Reading from the N-terminus, the 325-residue chain is Phospholipid phosphatase-related protein type 1 (325 aa).

Asn-5 carries N-linked (GlcNAc...) asparagine glycosylation. A run of 3 helical transmembrane segments spans residues 13-33 (IIPCFIFVELVIMAGTVLLAY), 67-87 (FISPLVLYCVLAATPTAIIFI), and 127-147 (FIGVFAFGLFATDIFVNAGQV). N-linked (GlcNAc...) asparagine glycosylation is present at Asn-163. 3 consecutive transmembrane segments (helical) span residues 201–218 (AALSIYSALYATMYITST), 230–247 (VLCLGTLCTAFLTGLNRV), and 257–277 (VIAGFILGTAVALFLGMCVVH). Ser-307 bears the Phosphoserine mark. N-linked (GlcNAc...) asparagine glycosylation is present at Asn-316.

This sequence belongs to the PA-phosphatase related phosphoesterase family.

It is found in the cell membrane. The protein resides in the cell projection. Its subcellular location is the neuron projection. Its function is as follows. May play a role in neurite outgrowth and neurogenesis. The polypeptide is Phospholipid phosphatase-related protein type 1 (Mus musculus (Mouse)).